Consider the following 171-residue polypeptide: 3-hydroxydecanoyl-[acyl-carrier-protein] dehydratase (171 aa).

Histidine 71 is a catalytic residue.

The protein belongs to the thioester dehydratase family. FabA subfamily. As to quaternary structure, homodimer.

Its subcellular location is the cytoplasm. It carries out the reaction a (3R)-hydroxyacyl-[ACP] = a (2E)-enoyl-[ACP] + H2O. The catalysed reaction is (3R)-hydroxydecanoyl-[ACP] = (2E)-decenoyl-[ACP] + H2O. The enzyme catalyses (2E)-decenoyl-[ACP] = (3Z)-decenoyl-[ACP]. It functions in the pathway lipid metabolism; fatty acid biosynthesis. Its function is as follows. Necessary for the introduction of cis unsaturation into fatty acids. Catalyzes the dehydration of (3R)-3-hydroxydecanoyl-ACP to E-(2)-decenoyl-ACP and then its isomerization to Z-(3)-decenoyl-ACP. Can catalyze the dehydratase reaction for beta-hydroxyacyl-ACPs with saturated chain lengths up to 16:0, being most active on intermediate chain length. The chain is 3-hydroxydecanoyl-[acyl-carrier-protein] dehydratase from Agrobacterium fabrum (strain C58 / ATCC 33970) (Agrobacterium tumefaciens (strain C58)).